A 704-amino-acid polypeptide reads, in one-letter code: Elongation factor G (704 aa).

A tr-type G domain is found at 10-290 (NKVRNIGIMA…AVIDYLPSPL (281 aa)). Residues 19–26 (AHIDAGKT), 83–87 (DTPGH), and 137–140 (NKMD) each bind GTP.

It belongs to the TRAFAC class translation factor GTPase superfamily. Classic translation factor GTPase family. EF-G/EF-2 subfamily.

The protein localises to the cytoplasm. Catalyzes the GTP-dependent ribosomal translocation step during translation elongation. During this step, the ribosome changes from the pre-translocational (PRE) to the post-translocational (POST) state as the newly formed A-site-bound peptidyl-tRNA and P-site-bound deacylated tRNA move to the P and E sites, respectively. Catalyzes the coordinated movement of the two tRNA molecules, the mRNA and conformational changes in the ribosome. This Clavibacter michiganensis subsp. michiganensis (strain NCPPB 382) protein is Elongation factor G.